The chain runs to 317 residues: Putative ribose-phosphate pyrophosphokinase (317 aa).

Positions 211–224 (GRDVIVLDDEIAKG) are binding of phosphoribosylpyrophosphate.

The protein belongs to the ribose-phosphate pyrophosphokinase family.

It carries out the reaction D-ribose 5-phosphate + ATP = 5-phospho-alpha-D-ribose 1-diphosphate + AMP + H(+). The protein is Putative ribose-phosphate pyrophosphokinase of Streptomyces coelicolor (strain ATCC BAA-471 / A3(2) / M145).